We begin with the raw amino-acid sequence, 973 residues long: NLR family member X1 (973 aa).

The N-terminal 84 residues, 1 to 84 (MRWGCHLPRT…EAIQRHRRNL (84 aa)), are a transit peptide targeting the mitochondrion. The required for interaction with MAVS stretch occupies residues 73 to 554 (ATEAIQRHRR…RILPLLFNLL (482 aa)). Positions 158-481 (QTVVLYGTVG…LRFFLAPCVE (324 aa)) constitute an NACHT domain. 164-171 (GTVGTGKS) provides a ligand contact to ATP. The required for the repression of MAVS-induced interferon signaling stretch occupies residues 554-972 (LKVVPRVFGR…TLLEQLGGSG (419 aa)). Positions 665-692 (RQVLPPSELLDHLFFHYEFQNQRFSAEV) constitute an LRRNT domain. 8 LRR repeats span residues 693 to 716 (LGSLRQLNLAGVRMTPLKCTVVAS), 722 to 745 (RHPLDEVNLASCQLDPAGLHTLMP), 747 to 775 (LLRARKLGLQLNNLGPEACRDLRDLLLHD), 776 to 799 (QCQITTLRLSNNPLTAAGVGVLMD), 809 to 832 (HLSLLHTDLGDEGLELLAAQLDRN), 833 to 855 (KQLQELNVAYNGAGDTVALALAK), 856 to 875 (AARKHPSLELLHLYFNELSS), and 876 to 897 (EGRQVLRDLGGSGEGGARVVAS). Positions 904–968 (VSEYWSVILS…SEVKTLLEQL (65 aa)) constitute an LRRCT domain.

This sequence belongs to the NLRP family. Homohexamer. Interacts with MAVS. Interacts with TUFM.

It is found in the mitochondrion outer membrane. Its function is as follows. Participates in antiviral signaling. Acts as a negative regulator of MAVS-mediated antiviral responses, through the inhibition of the virus-induced RLH (RIG-like helicase)-MAVS interaction. Instead, promotes autophagy by interacting with TUFM and subsequently recruiting the autophagy-related proteins ATG5 and ATG12. Also regulates MAVS-dependent NLRP3 inflammasome activation to attenuate apoptosis. Has no inhibitory function on NF-kappa-B signaling pathway, but enhances NF-kappa-B and JUN N-terminal kinase dependent signaling through the production of reactive oxygen species. Regulates viral mediated-inflammation and energy metabolism in a sex-dependent manner. In females, prevents uncontrolled inflammation and energy metabolism and thus, may contribute to the sex differences observed in infectious and inflammatory diseases. The protein is NLR family member X1 (Nlrx1) of Rattus norvegicus (Rat).